Reading from the N-terminus, the 820-residue chain is DNA mismatch repair protein MutS (820 aa).

618–625 (GPNMAGKS) provides a ligand contact to ATP.

The protein belongs to the DNA mismatch repair MutS family.

Functionally, this protein is involved in the repair of mismatches in DNA. It is possible that it carries out the mismatch recognition step. This protein has a weak ATPase activity. The polypeptide is DNA mismatch repair protein MutS (Chlamydia trachomatis serovar L2b (strain UCH-1/proctitis)).